A 261-amino-acid polypeptide reads, in one-letter code: MSNTLHEGFKFGDPGLINIRGTNGSGKSTIVKRYIPKGAVQKRFDDIGTTYYDCGTHFVVGRYETDCGGLDAVRGTYDPKTGQGIRPFEAGQIAIGRLAPLKTTFAEGVIYGTTFKGSKEVHDELAKTNTPYFWFSIDMPFQEVFDSVLLRRVKSGNADPLSTENIAKKFRPVLASLDKAVDAGLWTIYGHRDVIAQNVDDLVNNRPLTNADLIGRKPDLTKFNKEAQVWFDKGTVSPTQEMIDEHFPKPTTHGLGGFFKG.

The protein belongs to the thymidylate kinase family. 5-hmdU DNA kinase subfamily.

It carries out the reaction 5-hydroxymethyl-dUMP in DNA + ATP = 5-phosphomethyl-dUMP in DNA + ADP + H(+). Functionally, phosphorylates 5-hydroxymethyluracil (5hmdU) into 5-phosphomethyl-2'-deoxyuridine (5- PmdU) on DNA as a step in the pathway leading to thymidine hypermodifications in the viral genome. As a final result of the pathway of hypermodification, 5-Nalpha-putrescinylthymidine (Nalpha-PutT) substitutes for about 50% of thymidines in the viral DNA. These modifications probably prevent degradation of viral genome by the host restriction-modification antiviral defense system. The polypeptide is 5-hmdU DNA kinase (Delftia phage PhiW-14 (Deftia acidovorans bacteriophage phiW-14)).